Consider the following 471-residue polypeptide: Tryptophanase (471 aa).

N6-acetyllysine is present on residues Lys5, Lys115, and Lys156. Position 270 is an N6-(pyridoxal phosphate)lysine (Lys270). Lys450 is modified (N6-acetyllysine).

Belongs to the beta-eliminating lyase family. As to quaternary structure, homotetramer. Pyridoxal 5'-phosphate serves as cofactor.

It catalyses the reaction L-tryptophan + H2O = indole + pyruvate + NH4(+). The protein operates within amino-acid degradation; L-tryptophan degradation via pyruvate pathway; indole and pyruvate from L-tryptophan: step 1/1. The protein is Tryptophanase of Escherichia coli O9:H4 (strain HS).